Here is a 344-residue protein sequence, read N- to C-terminus: Arginine N-succinyltransferase (344 aa).

Residue L125 coordinates succinyl-CoA. Residue H229 is the Proton donor of the active site.

The protein belongs to the arginine N-succinyltransferase family.

It catalyses the reaction succinyl-CoA + L-arginine = N(2)-succinyl-L-arginine + CoA + H(+). Its pathway is amino-acid degradation; L-arginine degradation via AST pathway; L-glutamate and succinate from L-arginine: step 1/5. Catalyzes the transfer of succinyl-CoA to arginine to produce N(2)-succinylarginine. The polypeptide is Arginine N-succinyltransferase (Salmonella typhi).